Reading from the N-terminus, the 397-residue chain is Cysteine protease ATG4A (397 aa).

Residue cysteine 79 is the Nucleophile of the active site. Residues aspartate 279 and histidine 281 contribute to the active site. The LIR signature appears at 392 to 395 (FEIL).

Belongs to the peptidase C54 family.

The protein localises to the cytoplasm. It carries out the reaction [protein]-C-terminal L-amino acid-glycyl-phosphatidylethanolamide + H2O = [protein]-C-terminal L-amino acid-glycine + a 1,2-diacyl-sn-glycero-3-phosphoethanolamine. In terms of biological role, cysteine protease that plays a key role in autophagy by mediating both proteolytic activation and delipidation of ATG8 family proteins. The protease activity is required for proteolytic activation of ATG8 family proteins: cleaves the C-terminal amino acid of ATG8 proteins to reveal a C-terminal glycine. Exposure of the glycine at the C-terminus is essential for ATG8 proteins conjugation to phosphatidylethanolamine (PE) and insertion to membranes, which is necessary for autophagy. Protease activity is also required to counteract formation of high-molecular weight conjugates of ATG8 proteins (ATG8ylation): acts as a deubiquitinating-like enzyme that removes ATG8 conjugated to other proteins, such as ATG3. In addition to the protease activity, also mediates delipidation of ATG8 family proteins. Catalyzes delipidation of PE-conjugated forms of ATG8 proteins during macroautophagy. The sequence is that of Cysteine protease ATG4A from Xenopus laevis (African clawed frog).